The sequence spans 246 residues: Small ribosomal subunit protein uS3A (246 aa).

The region spanning 21-92 (LNEFLTRELA…SVELYAEKVA (72 aa)) is the KH type-2 domain. Residues 215–246 (DEIVPTTPISEQKAAKPDQPQPPAMPQPVATA) form a disordered region.

This sequence belongs to the universal ribosomal protein uS3 family.

It is found in the cytoplasm. It localises to the nucleus. The protein localises to the nucleolus. Its subcellular location is the mitochondrion inner membrane. The protein resides in the cytoskeleton. It is found in the spindle. It catalyses the reaction 2'-deoxyribonucleotide-(2'-deoxyribose 5'-phosphate)-2'-deoxyribonucleotide-DNA = a 3'-end 2'-deoxyribonucleotide-(2,3-dehydro-2,3-deoxyribose 5'-phosphate)-DNA + a 5'-end 5'-phospho-2'-deoxyribonucleoside-DNA + H(+). Component of the small ribosomal subunit. The ribosome is a large ribonucleoprotein complex responsible for the synthesis of proteins in the cell. Has endonuclease activity and plays a role in repair of damaged DNA. Also involved in other processes including regulation of transcription, translation of its cognate mRNA, spindle formation and chromosome movement during mitosis, and apoptosis. The protein is Small ribosomal subunit protein uS3A (rps3-a) of Xenopus laevis (African clawed frog).